Consider the following 388-residue polypeptide: Mannitol-1-phosphate 5-dehydrogenase (388 aa).

Residue 5–16 participates in NAD(+) binding; sequence AIQFGGGNIGRG. Lysine 213 is an active-site residue.

The protein belongs to the mannitol dehydrogenase family. Monomer.

The enzyme catalyses D-mannitol 1-phosphate + NAD(+) = beta-D-fructose 6-phosphate + NADH + H(+). In terms of biological role, catalyzes the NAD(H)-dependent interconversion of D-fructose 6-phosphate and D-mannitol 1-phosphate in the mannitol metabolic pathway. The sequence is that of Mannitol-1-phosphate 5-dehydrogenase (mpdA) from Aspergillus terreus (strain NIH 2624 / FGSC A1156).